A 156-amino-acid polypeptide reads, in one-letter code: Homeobox-leucine zipper protein ATHB-52 (156 aa).

A DNA-binding region (homeobox) is located at residues 8 to 67 (GKNKKKRLTQDQVRQLEKCFTMNKKLEPDLKLQLSNQLGLPQRQVAVWFQNKRARFKTQS). Positions 68-96 (LEVQHCTLQSKHEAALSDKAKLEHQVQFL) are leucine-zipper.

It belongs to the HD-ZIP homeobox family. Class I subfamily. Expressed in roots and flowers.

Its subcellular location is the nucleus. Functionally, probable transcription factor. The polypeptide is Homeobox-leucine zipper protein ATHB-52 (ATHB-52) (Arabidopsis thaliana (Mouse-ear cress)).